The primary structure comprises 159 residues: Disulfide bond formation protein B (159 aa).

The Cytoplasmic portion of the chain corresponds to Met-1 to Phe-8. A helical membrane pass occupies residues Phe-9–Tyr-25. Residues Leu-26–Phe-43 lie on the Periplasmic side of the membrane. The cysteines at positions 35 and 38 are disulfide-linked. The helical transmembrane segment at Ala-44–Leu-57 threads the bilayer. Topologically, residues Ser-58–Leu-63 are cytoplasmic. The helical transmembrane segment at Leu-64–Gly-81 threads the bilayer. The Periplasmic portion of the chain corresponds to Tyr-82–Leu-136. An intrachain disulfide couples Cys-94 to Cys-122. The helical transmembrane segment at Trp-137–Arg-155 threads the bilayer. The Cytoplasmic segment spans residues Arg-156 to Arg-159.

This sequence belongs to the DsbB family.

Its subcellular location is the cell inner membrane. Functionally, required for disulfide bond formation in some periplasmic proteins. Acts by oxidizing the DsbA protein. The protein is Disulfide bond formation protein B of Ralstonia nicotianae (strain ATCC BAA-1114 / GMI1000) (Ralstonia solanacearum).